The following is a 356-amino-acid chain: Heme A synthase (356 aa).

A run of 5 helical transmembrane segments spans residues 24–44 (IAIW…VGGV), 106–126 (FHRL…VYFM), 139–159 (LLGI…MVMS), 174–194 (AHLG…TGLI), and 214–234 (AWML…VAGI). Position 276 (His-276) interacts with heme. The next 3 helical transmembrane spans lie at 278–298 (LIAW…KQLS), 309–329 (LLLL…LLSV), and 331–351 (LTFA…ALWV). His-337 contacts heme.

The protein belongs to the COX15/CtaA family. Type 2 subfamily. Interacts with CtaB. Requires heme b as cofactor.

Its subcellular location is the cell membrane. It carries out the reaction Fe(II)-heme o + 2 A + H2O = Fe(II)-heme a + 2 AH2. It participates in porphyrin-containing compound metabolism; heme A biosynthesis; heme A from heme O: step 1/1. Catalyzes the conversion of heme O to heme A by two successive hydroxylations of the methyl group at C8. The first hydroxylation forms heme I, the second hydroxylation results in an unstable dihydroxymethyl group, which spontaneously dehydrates, resulting in the formyl group of heme A. This chain is Heme A synthase, found in Nitrosomonas eutropha (strain DSM 101675 / C91 / Nm57).